The primary structure comprises 184 residues: Urease accessory protein UreE (184 aa).

Residues 147–184 are disordered; sequence EHHGHSHSHSHSHDHDHDHDHDHQHGPSCSHGHHHGHR. The span at 157–171 shows a compositional bias: basic and acidic residues; it reads HSHDHDHDHDHDHQH.

It belongs to the UreE family.

The protein localises to the cytoplasm. Functionally, involved in urease metallocenter assembly. Binds nickel. Probably functions as a nickel donor during metallocenter assembly. The chain is Urease accessory protein UreE from Burkholderia mallei (strain ATCC 23344).